The primary structure comprises 279 residues: Diaminopimelate epimerase (279 aa).

Substrate contacts are provided by N11 and N72. The active-site Proton donor is the C81. Substrate is bound by residues 82–83, N187, and 205–206; these read GN and ER. C215 (proton acceptor) is an active-site residue. Position 216–217 (216–217) interacts with substrate; that stretch reads GT.

This sequence belongs to the diaminopimelate epimerase family. As to quaternary structure, homodimer.

The protein resides in the cytoplasm. The catalysed reaction is (2S,6S)-2,6-diaminopimelate = meso-2,6-diaminopimelate. Its pathway is amino-acid biosynthesis; L-lysine biosynthesis via DAP pathway; DL-2,6-diaminopimelate from LL-2,6-diaminopimelate: step 1/1. In terms of biological role, catalyzes the stereoinversion of LL-2,6-diaminopimelate (L,L-DAP) to meso-diaminopimelate (meso-DAP), a precursor of L-lysine and an essential component of the bacterial peptidoglycan. The protein is Diaminopimelate epimerase of Aquifex aeolicus (strain VF5).